The following is a 443-amino-acid chain: UDP-N-acetylmuramate--L-alanine ligase (443 aa).

ATP is bound at residue 110-116 (GAHGKTS).

It belongs to the MurCDEF family.

The protein localises to the cytoplasm. The catalysed reaction is UDP-N-acetyl-alpha-D-muramate + L-alanine + ATP = UDP-N-acetyl-alpha-D-muramoyl-L-alanine + ADP + phosphate + H(+). It participates in cell wall biogenesis; peptidoglycan biosynthesis. Functionally, cell wall formation. The protein is UDP-N-acetylmuramate--L-alanine ligase of Streptococcus agalactiae serotype V (strain ATCC BAA-611 / 2603 V/R).